Here is a 218-residue protein sequence, read N- to C-terminus: MVTILQYSADVTATTISTYRSELSAQLAQNLGKWSFELKMYKPNPASIGRSEHHNGNIPQGQQEAAAADQEIGGVAALYTLTQAHSKGDMVYVTQGSAVQGQPGVVVSDSFDMVLQNKMKSIWILRQTLRGDGAEYELMGDAYGRVKVRLANVFLQGTFRGLLFQYEYEGDTLDDRQQQHLMEFIQSSGFPSSNLIIGGNGSGLVQTGTQFVEALAQK.

The protein belongs to the Mediator complex subunit 20 family. In terms of assembly, component of the Mediator complex.

Its subcellular location is the nucleus. Its function is as follows. Component of the Mediator complex, a coactivator involved in the regulated transcription of nearly all RNA polymerase II-dependent genes. Mediator functions as a bridge to convey information from gene-specific regulatory proteins to the basal RNA polymerase II transcription machinery. Mediator is recruited to promoters by direct interactions with regulatory proteins and serves as a scaffold for the assembly of a functional preinitiation complex with RNA polymerase II and the general transcription factors. This is Mediator of RNA polymerase II transcription subunit 20 (SRB2) from Yarrowia lipolytica (strain CLIB 122 / E 150) (Yeast).